The sequence spans 494 residues: Glutamate--tRNA ligase (494 aa).

The 'HIGH' region motif lies at 9–19 (PSPTGDPHLGT). A 'KMSKS' region motif is present at residues 250–254 (KLSKR). Residue Lys-253 participates in ATP binding.

This sequence belongs to the class-I aminoacyl-tRNA synthetase family. Glutamate--tRNA ligase type 1 subfamily. As to quaternary structure, monomer.

The protein resides in the cytoplasm. The enzyme catalyses tRNA(Glu) + L-glutamate + ATP = L-glutamyl-tRNA(Glu) + AMP + diphosphate. In terms of biological role, catalyzes the attachment of glutamate to tRNA(Glu) in a two-step reaction: glutamate is first activated by ATP to form Glu-AMP and then transferred to the acceptor end of tRNA(Glu). The polypeptide is Glutamate--tRNA ligase (Pseudoalteromonas translucida (strain TAC 125)).